The primary structure comprises 216 residues: Uridine kinase (216 aa).

Position 16-23 (16-23 (GASASGKS)) interacts with ATP.

This sequence belongs to the uridine kinase family.

The protein resides in the cytoplasm. It catalyses the reaction uridine + ATP = UMP + ADP + H(+). The catalysed reaction is cytidine + ATP = CMP + ADP + H(+). The protein operates within pyrimidine metabolism; CTP biosynthesis via salvage pathway; CTP from cytidine: step 1/3. Its pathway is pyrimidine metabolism; UMP biosynthesis via salvage pathway; UMP from uridine: step 1/1. The protein is Uridine kinase of Pasteurella multocida (strain Pm70).